We begin with the raw amino-acid sequence, 301 residues long: Glycine--tRNA ligase alpha subunit (301 aa).

It belongs to the class-II aminoacyl-tRNA synthetase family. In terms of assembly, tetramer of two alpha and two beta subunits.

The protein resides in the cytoplasm. It carries out the reaction tRNA(Gly) + glycine + ATP = glycyl-tRNA(Gly) + AMP + diphosphate. The chain is Glycine--tRNA ligase alpha subunit from Shewanella denitrificans (strain OS217 / ATCC BAA-1090 / DSM 15013).